We begin with the raw amino-acid sequence, 391 residues long: S-adenosylmethionine synthase (391 aa).

The disordered stretch occupies residues 1-20; sequence MPRSDYLFTSESVSEGHPDK. Residue His-17 coordinates ATP. Asp-19 contacts Mg(2+). Glu-45 contacts K(+). L-methionine is bound by residues Glu-58 and Gln-102. Residues 102–112 are flexible loop; it reads QSADIAQGVDA. Residues 169-171, 235-236, Asp-244, 250-251, Ala-267, and Lys-271 contribute to the ATP site; these read DAK, KF, and RK. Position 244 (Asp-244) interacts with L-methionine. Lys-275 is a binding site for L-methionine.

The protein belongs to the AdoMet synthase family. In terms of assembly, homotetramer; dimer of dimers. Mg(2+) serves as cofactor. It depends on K(+) as a cofactor.

It localises to the cytoplasm. It catalyses the reaction L-methionine + ATP + H2O = S-adenosyl-L-methionine + phosphate + diphosphate. The protein operates within amino-acid biosynthesis; S-adenosyl-L-methionine biosynthesis; S-adenosyl-L-methionine from L-methionine: step 1/1. Functionally, catalyzes the formation of S-adenosylmethionine (AdoMet) from methionine and ATP. The overall synthetic reaction is composed of two sequential steps, AdoMet formation and the subsequent tripolyphosphate hydrolysis which occurs prior to release of AdoMet from the enzyme. The protein is S-adenosylmethionine synthase of Methylorubrum populi (strain ATCC BAA-705 / NCIMB 13946 / BJ001) (Methylobacterium populi).